A 432-amino-acid polypeptide reads, in one-letter code: Ectonucleoside triphosphate diphosphohydrolase 5 (432 aa).

Positions 1 to 24 are cleaved as a signal peptide; it reads MALYQGAAFFMLVASCVCSTVFHR. The active-site Proton acceptor is Glu-175. A glycan (N-linked (GlcNAc...) asparagine) is linked at Asn-235. Cystine bridges form between Cys-275-Cys-307 and Cys-367-Cys-381. An N-linked (GlcNAc...) asparagine glycan is attached at Asn-372.

This sequence belongs to the GDA1/CD39 NTPase family. In terms of assembly, monomer; active form. Homodimer; disulfide-linked. Homodimers are enzymatically inactive. The cofactor is Ca(2+). Mg(2+) is required as a cofactor. Post-translationally, N-glycosylated; high-mannose type.

The protein localises to the endoplasmic reticulum. Its subcellular location is the secreted. It catalyses the reaction a ribonucleoside 5'-diphosphate + H2O = a ribonucleoside 5'-phosphate + phosphate + H(+). It carries out the reaction GDP + H2O = GMP + phosphate + H(+). The enzyme catalyses UDP + H2O = UMP + phosphate + H(+). The catalysed reaction is IDP + H2O = IMP + phosphate + H(+). It catalyses the reaction CDP + H2O = CMP + phosphate + H(+). It carries out the reaction ADP + H2O = AMP + phosphate + H(+). Its pathway is protein modification; protein glycosylation. Hydrolyzes nucleoside diphosphates with a preference for GDP, IDP and UDP compared to ADP and CDP. In the lumen of the endoplasmic reticulum, hydrolyzes UDP that acts as an end-product feedback inhibitor of the UDP-Glc:glycoprotein glucosyltransferases. UMP can be transported back by an UDP-sugar antiporter to the cytosol where it is consumed to regenerate UDP-glucose. Therefore, it positively regulates protein reglucosylation by clearing UDP from the ER lumen and by promoting the regeneration of UDP-glucose. Protein reglucosylation is essential to proper glycoprotein folding and quality control in the ER. This is Ectonucleoside triphosphate diphosphohydrolase 5 (ENTPD5) from Bos taurus (Bovine).